The primary structure comprises 442 residues: ATP-dependent protease ATPase subunit HslU (442 aa).

Residues Ile18, Gly60–Glu65, Asp255, Glu320, and Arg392 each bind ATP.

This sequence belongs to the ClpX chaperone family. HslU subfamily. As to quaternary structure, a double ring-shaped homohexamer of HslV is capped on each side by a ring-shaped HslU homohexamer. The assembly of the HslU/HslV complex is dependent on binding of ATP.

It localises to the cytoplasm. Functionally, ATPase subunit of a proteasome-like degradation complex; this subunit has chaperone activity. The binding of ATP and its subsequent hydrolysis by HslU are essential for unfolding of protein substrates subsequently hydrolyzed by HslV. HslU recognizes the N-terminal part of its protein substrates and unfolds these before they are guided to HslV for hydrolysis. The chain is ATP-dependent protease ATPase subunit HslU from Shewanella sp. (strain W3-18-1).